A 381-amino-acid chain; its full sequence is Acetylornithine deacetylase (381 aa).

Residue His79 coordinates Zn(2+). Residue Asp81 is part of the active site. Asp111 serves as a coordination point for Zn(2+). Glu143 is a catalytic residue. Zn(2+) is bound by residues Glu144, Glu168, and His354.

It belongs to the peptidase M20A family. ArgE subfamily. Homodimer. Zn(2+) is required as a cofactor. Requires Co(2+) as cofactor. Glutathione serves as cofactor.

It localises to the cytoplasm. The catalysed reaction is N(2)-acetyl-L-ornithine + H2O = L-ornithine + acetate. The protein operates within amino-acid biosynthesis; L-arginine biosynthesis; L-ornithine from N(2)-acetyl-L-ornithine (linear): step 1/1. In terms of biological role, catalyzes the hydrolysis of the amide bond of N(2)-acetylated L-amino acids. Cleaves the acetyl group from N-acetyl-L-ornithine to form L-ornithine, an intermediate in L-arginine biosynthesis pathway, and a branchpoint in the synthesis of polyamines. This is Acetylornithine deacetylase from Buchnera aphidicola subsp. Acyrthosiphon pisum (strain APS) (Acyrthosiphon pisum symbiotic bacterium).